The primary structure comprises 657 residues: uncharacterized protein (657 aa).

The N-terminal stretch at 1–26 (MFGKGLVKKSLLFFSGVSTMAVFLVS) is a signal peptide. Residue Cys-27 is the site of N-palmitoyl cysteine attachment. Cys-27 carries S-diacylglycerol cysteine lipidation. Disordered stretches follow at residues 291 to 316 (ISPK…FSST), 468 to 496 (RLSS…DGII), and 516 to 563 (KSMT…KETN). Positions 294–304 (KQGSDNNSNLS) are enriched in polar residues. Over residues 469 to 495 (LSSDDTNTKKALKEVSTHKNGSDKDGI) the composition is skewed to basic and acidic residues. The span at 516–525 (KSMTDNNSGT) shows a compositional bias: polar residues. Residues 526 to 545 (EQKKNLSEVDTKKKEKESKG) are compositionally biased toward basic and acidic residues. The span at 546-559 (KTQSNGQDSGQQNG) shows a compositional bias: low complexity.

The protein to T.pallidum TmpC.

The protein resides in the cell membrane. This is an uncharacterized protein from Mycoplasma pneumoniae (strain ATCC 29342 / M129 / Subtype 1) (Mycoplasmoides pneumoniae).